The chain runs to 370 residues: 5-hydroxytryptamine receptor 5B (370 aa).

Positions 1–36 (MEVSNLSGATPGLAFPPGPESCSDSPSSGRSMGSTP) are disordered. Topologically, residues 1–48 (MEVSNLSGATPGLAFPPGPESCSDSPSSGRSMGSTPGGLILPGREPPF) are extracellular. A glycan (N-linked (GlcNAc...) asparagine) is linked at asparagine 5. The span at 20-36 (ESCSDSPSSGRSMGSTP) shows a compositional bias: low complexity. A helical membrane pass occupies residues 49–75 (SAFTVLVVTLLVLLIAATFLWNLLVLV). The Cytoplasmic segment spans residues 76–88 (TILRVRAFHRVPH). Residues 89–115 (NLVASTAVSDVLVAVLVMPLSLVSELS) form a helical membrane-spanning segment. At 116 to 127 (AGRRWQLGRSLC) the chain is on the extracellular side. Cysteines 127 and 205 form a disulfide. A helical membrane pass occupies residues 128–150 (HVWISFDVLCCTASIWNVAAIAL). Aspartate 134 provides a ligand contact to serotonin. At 151–168 (DRYWTITRHLQYTLRTRS) the chain is on the cytoplasmic side. The helical transmembrane segment at 169–189 (RASALMIAITWALSALIALAP) threads the bilayer. The Extracellular portion of the chain corresponds to 190–211 (LLFGWGEAYDARLQRCQVSQEP). The helical transmembrane segment at 212–233 (SYAVFSTCGAFYLPLAVVLFVY) threads the bilayer. Residues 234-300 (WKIYKAAKFR…QKEKRAAMMV (67 aa)) lie on the Cytoplasmic side of the membrane. A helical membrane pass occupies residues 301 to 325 (GILIGVFVLCWIPFFLTELISPLCA). At 326–327 (CS) the chain is on the extracellular side. The chain crosses the membrane as a helical span at residues 328 to 352 (LPPIWKSIFLWLGYSNSFFNPLIYT). Topologically, residues 353-370 (AFNKNYNNAFKSLFTKQR) are cytoplasmic.

This sequence belongs to the G-protein coupled receptor 1 family. In terms of tissue distribution, expressed predominantly in the central nervous system; in the hippocampus, habenula, and the doral raphe.

Its subcellular location is the cell membrane. In terms of biological role, G-protein coupled receptor for 5-hydroxytryptamine (serotonin), a biogenic hormone that functions as a neurotransmitter, a hormone and a mitogen. Also functions as a receptor for ergot alkaloid derivatives and other psychoactive substances. Ligand binding causes a conformation change that triggers signaling via guanine nucleotide-binding proteins (G proteins) and modulates the activity of downstream effectors. Htr5b is coupled to G(i)/G(o) G alpha proteins and mediates inhibitory neurotransmission: signaling inhibits adenylate cyclase activity and activates a phosphatidylinositol-calcium second messenger system that regulates the release of Ca(2+) ions from intracellular stores. This is 5-hydroxytryptamine receptor 5B from Mus musculus (Mouse).